Consider the following 338-residue polypeptide: Ketol-acid reductoisomerase (NADP(+)) (338 aa).

The KARI N-terminal Rossmann domain occupies 1–181 (MKVYYDKDAD…GGTKGGVIET (181 aa)). Residues 24–27 (YGSQ), Arg47, Ser52, and 82–85 (DESQ) each bind NADP(+). The active site involves His107. Gly133 contributes to the NADP(+) binding site. In terms of domain architecture, KARI C-terminal knotted spans 182–327 (NFREETETDL…AELRAMMPWI (146 aa)). 4 residues coordinate Mg(2+): Asp190, Glu194, Glu226, and Glu230. Ser251 provides a ligand contact to substrate.

The protein belongs to the ketol-acid reductoisomerase family. The cofactor is Mg(2+).

It carries out the reaction (2R)-2,3-dihydroxy-3-methylbutanoate + NADP(+) = (2S)-2-acetolactate + NADPH + H(+). The catalysed reaction is (2R,3R)-2,3-dihydroxy-3-methylpentanoate + NADP(+) = (S)-2-ethyl-2-hydroxy-3-oxobutanoate + NADPH + H(+). It participates in amino-acid biosynthesis; L-isoleucine biosynthesis; L-isoleucine from 2-oxobutanoate: step 2/4. The protein operates within amino-acid biosynthesis; L-valine biosynthesis; L-valine from pyruvate: step 2/4. Involved in the biosynthesis of branched-chain amino acids (BCAA). Catalyzes an alkyl-migration followed by a ketol-acid reduction of (S)-2-acetolactate (S2AL) to yield (R)-2,3-dihydroxy-isovalerate. In the isomerase reaction, S2AL is rearranged via a Mg-dependent methyl migration to produce 3-hydroxy-3-methyl-2-ketobutyrate (HMKB). In the reductase reaction, this 2-ketoacid undergoes a metal-dependent reduction by NADPH to yield (R)-2,3-dihydroxy-isovalerate. The sequence is that of Ketol-acid reductoisomerase (NADP(+)) from Chromobacterium violaceum (strain ATCC 12472 / DSM 30191 / JCM 1249 / CCUG 213 / NBRC 12614 / NCIMB 9131 / NCTC 9757 / MK).